Here is a 317-residue protein sequence, read N- to C-terminus: Flagellar hook-associated protein 3 (317 aa).

This sequence belongs to the bacterial flagellin family.

It localises to the secreted. It is found in the bacterial flagellum. The protein is Flagellar hook-associated protein 3 (flgL) of Escherichia coli (strain K12).